The following is a 427-amino-acid chain: Trigger factor (427 aa).

The 86-residue stretch at 163 to 248 folds into the PPIase FKBP-type domain; that stretch reads GDIAVIDFKG…IKSIKVKELP (86 aa).

It belongs to the FKBP-type PPIase family. Tig subfamily.

Its subcellular location is the cytoplasm. The catalysed reaction is [protein]-peptidylproline (omega=180) = [protein]-peptidylproline (omega=0). Functionally, involved in protein export. Acts as a chaperone by maintaining the newly synthesized protein in an open conformation. Functions as a peptidyl-prolyl cis-trans isomerase. The sequence is that of Trigger factor from Clostridium beijerinckii (strain ATCC 51743 / NCIMB 8052) (Clostridium acetobutylicum).